Here is a 1837-residue protein sequence, read N- to C-terminus: AF4/FMR2 family member lilli (1837 aa).

Disordered stretches follow at residues 1 to 25 (MAQQ…QQQQ), 65 to 109 (NLYS…PRRL), 162 to 295 (IQQQ…LHNG), 455 to 592 (QQLP…KKKY), 605 to 712 (TGLL…PGNV), 797 to 852 (PKSQ…LQIP), 868 to 1250 (NNMQ…GGAK), 1267 to 1311 (QQQQ…GLAS), and 1344 to 1466 (APSS…DPML). The span at 16-25 (HQQQQQQQQQ) shows a compositional bias: low complexity. Basic and acidic residues predominate over residues 84–109 (REKYERQQGIQSDDRETSLFSEPRRL). 3 stretches are compositionally biased toward low complexity: residues 162 to 179 (IQQQ…VASS), 187 to 200 (QTQQ…QQQQ), and 247 to 264 (NSNS…SSSS). Threonine 468 carries the phosphothreonine modification. Residues 475 to 488 (LKIEKNPILEKQDS) show a composition bias toward basic and acidic residues. Acidic residues predominate over residues 490 to 500 (LENDLELSESE). Residues serine 497 and serine 499 each carry the phosphoserine modification. 2 stretches are compositionally biased toward low complexity: residues 509–529 (SPGS…SESS) and 542–552 (QQQQQTQQQQL). Residues 553-563 (HGHHPQSHHHQ) are compositionally biased toward basic residues. Residues 564-583 (QFLQQQLQRQQQQQQQQQQL) are compositionally biased toward low complexity. Composition is skewed to gly residues over residues 612–633 (GGLG…GNGG) and 641–673 (GSMG…GIGS). Polar residues-rich tracts occupy residues 678 to 690 (NKTP…NKWN) and 698 to 711 (PTSQ…SPGN). A compositionally biased stretch (low complexity) spans 815 to 837 (SESATSGSSSSSCSSSDSAASAS). The span at 868–880 (NNMQKSQSMSVTV) shows a compositional bias: polar residues. The segment covering 892 to 902 (PRQKKPRKKKM) has biased composition (basic residues). Phosphoserine occurs at positions 913 and 914. 2 stretches are compositionally biased toward low complexity: residues 927 to 951 (VVAQ…ATTT) and 961 to 1013 (QQQQ…SSVL). A DNA-binding region (a.T hook) is located at residues 952–964 (KKGRGRPRKQQQQ). 2 positions are modified to phosphoserine: serine 974 and serine 976. The segment covering 1021 to 1033 (SQSSSNGNTPTKK) has biased composition (polar residues). 4 stretches are compositionally biased toward low complexity: residues 1034-1049 (MSSI…SAAA), 1056-1091 (AVAA…SSSS), 1130-1139 (GSSSPTSSSS), and 1157-1173 (ISNS…VNNN). Over residues 1174–1184 (LQQQAMPQQSP) the composition is skewed to polar residues. The span at 1189–1212 (LSGGSQQLSSSDSSSSSSGSSSSS) shows a compositional bias: low complexity. Residues 1217-1234 (DAKREKNRERKPKSDKNK) show a composition bias toward basic and acidic residues. Positions 1267 to 1276 (QQQQQQQQVQ) are enriched in low complexity. Over residues 1345–1355 (PSSSNQQNGHL) the composition is skewed to polar residues. Residues 1373–1386 (KVKHEHHQLHHHSQ) show a composition bias toward basic residues. Composition is skewed to basic and acidic residues over residues 1393–1407 (VKPE…ETKF) and 1416–1432 (FQLK…ERDQ). Serine 1517 bears the Phosphoserine mark. The span at 1550–1560 (AVQTTPPTSVT) shows a compositional bias: polar residues. Disordered regions lie at residues 1550 to 1571 (AVQT…LVSQ) and 1727 to 1756 (GNTP…IVPQ). The segment covering 1727-1747 (GNTPSSISPSNSVGSQGSGSN) has biased composition (low complexity).

This sequence belongs to the AF4 family.

The protein localises to the nucleus. In terms of biological role, has a role in transcriptional regulation. Acts in parallel with the Ras/MAPK and the PI3K/PKB pathways in the control of cell identity and cellular growth. Essential for regulation of the cytoskeleton and cell growth but not for cell proliferation or growth rate. Required specifically for the microtubule-based basal transport of lipid droplets. Plays a partially redundant function downstream of Raf in cell fate specification in the developing eye. Pair-rule protein that regulates embryonic cellularization, gastrulation and segmentation. This chain is AF4/FMR2 family member lilli, found in Drosophila willistoni (Fruit fly).